The following is a 211-amino-acid chain: Pyridoxine/pyridoxamine 5'-phosphate oxidase (211 aa).

Substrate contacts are provided by residues 8–11 (RKNY) and K66. Residues 61 to 66 (RIVLLK), 76 to 77 (FT), K83, and Q105 each bind FMN. Substrate contacts are provided by Y123, R127, and S131. Residues 140 to 141 (QS) and W184 each bind FMN. 190–192 (RLH) is a substrate binding site. Residue R194 coordinates FMN.

Belongs to the pyridoxamine 5'-phosphate oxidase family. As to quaternary structure, homodimer. FMN is required as a cofactor.

The catalysed reaction is pyridoxamine 5'-phosphate + O2 + H2O = pyridoxal 5'-phosphate + H2O2 + NH4(+). It catalyses the reaction pyridoxine 5'-phosphate + O2 = pyridoxal 5'-phosphate + H2O2. Its pathway is cofactor metabolism; pyridoxal 5'-phosphate salvage; pyridoxal 5'-phosphate from pyridoxamine 5'-phosphate: step 1/1. It functions in the pathway cofactor metabolism; pyridoxal 5'-phosphate salvage; pyridoxal 5'-phosphate from pyridoxine 5'-phosphate: step 1/1. Functionally, catalyzes the oxidation of either pyridoxine 5'-phosphate (PNP) or pyridoxamine 5'-phosphate (PMP) into pyridoxal 5'-phosphate (PLP). This is Pyridoxine/pyridoxamine 5'-phosphate oxidase from Polynucleobacter asymbioticus (strain DSM 18221 / CIP 109841 / QLW-P1DMWA-1) (Polynucleobacter necessarius subsp. asymbioticus).